The sequence spans 268 residues: Ubiquinone biosynthesis protein COQ4 homolog, mitochondrial (268 aa).

Zn(2+)-binding residues include His-171, Asp-172, His-175, and Glu-187.

It belongs to the COQ4 family. As to quaternary structure, component of a multi-subunit COQ enzyme complex. It depends on Zn(2+) as a cofactor.

It localises to the mitochondrion inner membrane. It carries out the reaction a 4-hydroxy-3-methoxy-5-(all-trans-polyprenyl)benzoate + H(+) = a 2-methoxy-6-(all-trans-polyprenyl)phenol + CO2. It participates in cofactor biosynthesis; ubiquinone biosynthesis. Lyase that catalyzes the C1-decarboxylation of 4-hydroxy-3-methoxy-5-(all-trans-polyprenyl)benzoic acid into 2-methoxy-6-(all-trans-polyprenyl)phenol during ubiquinone biosynthesis. The protein is Ubiquinone biosynthesis protein COQ4 homolog, mitochondrial of Drosophila yakuba (Fruit fly).